The chain runs to 1464 residues: Collagen alpha-1(I) chain (1464 aa).

A signal peptide spans 1–22 (MFSFVDLRLLLLLAATALLTHG). The propeptide at 23 to 161 (QEEGQVEGQD…PPGLGGNFAP (139 aa)) is N-terminal propeptide. A VWFC domain is found at 38–96 (ITCVQNGLRYHDRDVWKPEPCRICVCDNGKVLCDDVICDETKNCPGAEVPEGECCPVCP). Residues 98–1214 (GSESPTDQET…PQEKAHDGGR (1117 aa)) are disordered. Over residues 138–153 (PGLPGPPGPPGPPGPP) the composition is skewed to pro residues. A Pyrrolidone carboxylic acid modification is found at Q162. Positions 162–178 (QLSYGYDEKSTGGISVP) are nonhelical region (N-terminal). The residue at position 170 (K170) is an Allysine. S171 is modified (phosphoserine). The segment at 179-1192 (GPMGPSGPRG…PGPPGPPGPP (1014 aa)) is triple-helical region. Residues P190, P193, P196, P205, P208, P211, P226, P241, P247, P256, and P262 each carry the 4-hydroxyproline modification. A compositionally biased stretch (low complexity) spans 198–217 (PQGFQGPPGEPGEPGASGPM). The span at 229 to 243 (NGDDGEAGKPGRPGE) shows a compositional bias: basic and acidic residues. K265 bears the 5-hydroxylysine; alternate mark. Residue K265 is glycosylated (O-linked (Gal...) hydroxylysine; alternate). S271 is modified (phosphoserine). Low complexity predominate over residues 279 to 295 (DAGPAGPKGEPGSPGEN). A 4-hydroxyproline mark is found at P289, P292, P298, P307, and P313. A compositionally biased stretch (low complexity) spans 318-331 (PAGARGNDGATGAA). A compositionally biased stretch (pro residues) spans 333–345 (PPGPTGPAGPPGF). P334, P343, P346, P373, P376, P388, P394, P403, P409, P412, and P427 each carry 4-hydroxyproline. Residues 379–418 (AGAAGPAGNPGADGQPGAKGANGAPGIAGAPGFPGARGPS) are compositionally biased toward low complexity. Residue K430 is modified to 5-hydroxylysine. 4-hydroxyproline occurs at positions 436, 439, 451, 460, 475, 481, 490, and 496. Residues 448-457 (KGEPGPVGVQ) show a composition bias toward low complexity. Residues 485 to 494 (GERGGPGSRG) are compositionally biased toward gly residues. Position 505 is a 5-hydroxylysine (K505). A 4-hydroxyproline mark is found at P514, P523, P529, P535, P544, P547, P556, P565, P571, P583, P592, P601, P604, P622, P640, P646, P652, P658, P664, P670, P682, P691, P703, P715, P718, P724, P730, and P739. The span at 538–564 (KGLTGSPGSPGPDGKTGPPGPAGQDGR) shows a compositional bias: low complexity. Residues 573 to 592 (ARGQAGVMGFPGPKGAAGEP) are compositionally biased toward low complexity. Low complexity predominate over residues 634–661 (QGPAGSPGFQGLPGPAGPPGEAGKPGEQ). The span at 696–724 (PRGANGAPGNDGAKGDAGAPGAPGSQGAP) shows a compositional bias: low complexity. The Cell attachment site motif lies at 745-747 (RGD). A 5-hydroxylysine modification is found at K751. A 4-hydroxyproline mark is found at P757, P772, and P778. The segment covering 784 to 798 (SGPSGPAGPTGARGA) has biased composition (low complexity). At S787 the chain carries Phosphoserine. P799, P805, P808, P817, P823, P841, P850, and P859 each carry 4-hydroxyproline. Over residues 811–838 (AGFAGPPGADGQPGAKGEPGDAGAKGDA) the composition is skewed to low complexity. Residues 840–852 (PPGPAGPAGPPGP) show a composition bias toward pro residues. Residues 853–883 (IGNVGAPGAKGARGSAGPPGATGFPGAAGRV) show a composition bias toward low complexity. Position 862 is a 5-hydroxylysine (K862). Residues P871 and P877 each carry the 4-hydroxyproline modification. P885 carries the 3-hydroxyproline modification. 4-hydroxyproline is present on residues P886, P895, P898, P919, P928, P937, P946, P964, P973, P976, P982, P997, P1003, P1009, P1018, and P1024. A compositionally biased stretch (low complexity) spans 912 to 921 (ETGPAGRPGE). Residues 931–955 (AGEKGSPGADGPAGAPGTPGPQGIA) show a composition bias toward low complexity. Residues 996 to 1006 (PPGPMGPPGLA) show a composition bias toward pro residues. Position 1033 is a 5-hydroxylysine (K1033). The span at 1042 to 1057 (AGPPGAPGAPGAPGPV) shows a compositional bias: pro residues. 4-hydroxyproline occurs at positions 1045, 1048, and 1051. Residues 1078–1092 (VGPVGARGPAGPQGP) are compositionally biased toward low complexity. Residues 1093 to 1095 (RGD) carry the Cell attachment site motif. Residues 1093-1107 (RGDKGETGEQGDRGI) show a composition bias toward basic and acidic residues. At K1096 the chain carries 5-hydroxylysine. The residue at position 1108 (K1108) is a 5-hydroxylysine; alternate. Residue K1108 is glycosylated (O-linked (Gal...) hydroxylysine; alternate). 4-hydroxyproline occurs at positions 1120, 1123, 1126, 1144, and 1159. The span at 1126 to 1159 (PGEQGPSGASGPAGPRGPPGSAGAPGKDGLNGLP) shows a compositional bias: low complexity. 3-hydroxyproline is present on P1164. P1165 carries the 4-hydroxyproline modification. Over residues 1177–1192 (VGPPGPPGPPGPPGPP) the composition is skewed to pro residues. The residue at position 1179 (P1179) is a 3-hydroxyproline. P1180 carries the post-translational modification 4-hydroxyproline. 3-hydroxyproline is present on P1182. At P1183 the chain carries 4-hydroxyproline. P1185 is subject to 3-hydroxyproline. P1186, P1189, and P1192 each carry 4-hydroxyproline. The tract at residues 1193–1218 (SAGFDFSFLPQPPQEKAHDGGRYYRA) is nonhelical region (C-terminal). Residue K1208 is modified to Allysine. Residues 1219-1464 (DDANVVRDRD…GFDVGPVCFL (246 aa)) constitute a propeptide, C-terminal propeptide. Positions 1229 to 1464 (LEVDTTLKSL…GFDVGPVCFL (236 aa)) constitute a Fibrillar collagen NC1 domain. Disulfide bonds link C1259–C1291, C1299–C1462, and C1370–C1415. 5 residues coordinate Ca(2+): D1277, N1279, Q1280, C1282, and D1285. N1365 carries an N-linked (GlcNAc...) asparagine glycan.

Belongs to the fibrillar collagen family. As to quaternary structure, trimers of one alpha 2(I) and two alpha 1(I) chains. Interacts with MRC2. Interacts with TRAM2. Interacts with MFAP4 in a Ca (2+)-dependent manner. Post-translationally, contains mostly 4-hydroxyproline. Proline residues at the third position of the tripeptide repeating unit (G-X-Y) are hydroxylated in some or all of the chains. Contains 3-hydroxyproline at a few sites. This modification occurs on the first proline residue in the sequence motif Gly-Pro-Hyp, where Hyp is 4-hydroxyproline. In terms of processing, lysine residues at the third position of the tripeptide repeating unit (G-X-Y) are 5-hydroxylated in some or all of the chains. Post-translationally, O-glycosylated on hydroxylated lysine residues. The O-linked glycan consists of a Glc-Gal disaccharide. In terms of tissue distribution, forms the fibrils of tendon, ligaments and bones. In bones the fibrils are mineralized with calcium hydroxyapatite.

The protein resides in the secreted. It is found in the extracellular space. Its subcellular location is the extracellular matrix. Functionally, type I collagen is a member of group I collagen (fibrillar forming collagen). The chain is Collagen alpha-1(I) chain (COL1A1) from Homo sapiens (Human).